The following is a 121-amino-acid chain: Prismalin-14 (121 aa).

A signal peptide spans 1-16 (MRSLLVLLALAACASA). Gln-17 is modified (pyrrolidone carboxylic acid). 4 repeat units span residues 48 to 51 (PIYR), 52 to 55 (PIYR), 56 to 59 (PIYY), and 60 to 63 (PQII). The tract at residues 48 to 63 (PIYRPIYRPIYYPQII) is 4 X 4 AA approximate tandem repeats of P-I-Y-R.

Expressed only at the mantle edge where it is found predominantly in the inner side of the outer mantle fold.

Functionally, displays inhibitory activity against calcium carbonate precipitation, binds calcium and affects crystallization of calcium carbonate in vitro. May be involved in calcification of the prismatic layer of the shell. The protein is Prismalin-14 of Pinctada fucata (Akoya pearl oyster).